The following is a 272-amino-acid chain: Diaminopimelate epimerase (272 aa).

Substrate is bound by residues asparagine 11 and asparagine 60. The active-site Proton donor is the cysteine 69. Substrate is bound by residues 70–71 (GN), asparagine 181, and 199–200 (ER). The active-site Proton acceptor is cysteine 209. Position 210-211 (210-211 (GT)) interacts with substrate.

The protein belongs to the diaminopimelate epimerase family. In terms of assembly, homodimer.

The protein resides in the cytoplasm. It catalyses the reaction (2S,6S)-2,6-diaminopimelate = meso-2,6-diaminopimelate. Its pathway is amino-acid biosynthesis; L-lysine biosynthesis via DAP pathway; DL-2,6-diaminopimelate from LL-2,6-diaminopimelate: step 1/1. Functionally, catalyzes the stereoinversion of LL-2,6-diaminopimelate (L,L-DAP) to meso-diaminopimelate (meso-DAP), a precursor of L-lysine and an essential component of the bacterial peptidoglycan. The polypeptide is Diaminopimelate epimerase (Helicobacter pylori (strain P12)).